The chain runs to 552 residues: Chromosomal replication initiator protein DnaA (552 aa).

Residues 1-90 (MWNETWNEIT…FTVAVTVDPT (90 aa)) form a domain I, interacts with DnaA modulators region. Residues 90 to 210 (TLDVIQDLPH…KPAHDPDRNG (121 aa)) are domain II. The tract at residues 113-213 (EHPHYSPVSQ…HDPDRNGSLN (101 aa)) is disordered. Residues 155 to 170 (PQPSQSSQSAQQQPAQ) are compositionally biased toward low complexity. Positions 211 to 427 (SLNPRYTFDT…GAFIRVSAYA (217 aa)) are domain III, AAA+ region. Residues G255, G257, K258, and T259 each coordinate ATP. Residues 428-552 (SLNEAPINMA…TQQIKSSDRA (125 aa)) form a domain IV, binds dsDNA region.

It belongs to the DnaA family. Oligomerizes as a right-handed, spiral filament on DNA at oriC.

It is found in the cytoplasm. In terms of biological role, plays an essential role in the initiation and regulation of chromosomal replication. ATP-DnaA binds to the origin of replication (oriC) to initiate formation of the DNA replication initiation complex once per cell cycle. Binds the DnaA box (a 9 base pair repeat at the origin) and separates the double-stranded (ds)DNA. Forms a right-handed helical filament on oriC DNA; dsDNA binds to the exterior of the filament while single-stranded (ss)DNA is stabiized in the filament's interior. The ATP-DnaA-oriC complex binds and stabilizes one strand of the AT-rich DNA unwinding element (DUE), permitting loading of DNA polymerase. After initiation quickly degrades to an ADP-DnaA complex that is not apt for DNA replication. Binds acidic phospholipids. The polypeptide is Chromosomal replication initiator protein DnaA (Corynebacterium diphtheriae (strain ATCC 700971 / NCTC 13129 / Biotype gravis)).